A 285-amino-acid polypeptide reads, in one-letter code: Nucleotide-binding protein PFLU_0879 (285 aa).

8–15 (GRSGSGKS) contributes to the ATP binding site. 60–63 (DARN) provides a ligand contact to GTP.

This sequence belongs to the RapZ-like family.

In terms of biological role, displays ATPase and GTPase activities. The sequence is that of Nucleotide-binding protein PFLU_0879 from Pseudomonas fluorescens (strain SBW25).